The sequence spans 129 residues: Ribosome-binding factor A (129 aa).

This sequence belongs to the RbfA family. In terms of assembly, monomer. Binds 30S ribosomal subunits, but not 50S ribosomal subunits or 70S ribosomes.

It localises to the cytoplasm. Functionally, one of several proteins that assist in the late maturation steps of the functional core of the 30S ribosomal subunit. Associates with free 30S ribosomal subunits (but not with 30S subunits that are part of 70S ribosomes or polysomes). Required for efficient processing of 16S rRNA. May interact with the 5'-terminal helix region of 16S rRNA. This is Ribosome-binding factor A from Ectopseudomonas mendocina (strain ymp) (Pseudomonas mendocina).